Reading from the N-terminus, the 217-residue chain is Protein-L-isoaspartate O-methyltransferase 2 (217 aa).

Residue serine 62 is part of the active site.

It belongs to the methyltransferase superfamily. L-isoaspartyl/D-aspartyl protein methyltransferase family.

The protein localises to the cytoplasm. The enzyme catalyses [protein]-L-isoaspartate + S-adenosyl-L-methionine = [protein]-L-isoaspartate alpha-methyl ester + S-adenosyl-L-homocysteine. In terms of biological role, catalyzes the methyl esterification of L-isoaspartyl residues in peptides and proteins that result from spontaneous decomposition of normal L-aspartyl and L-asparaginyl residues. It plays a role in the repair and/or degradation of damaged proteins. This Geotalea uraniireducens (strain Rf4) (Geobacter uraniireducens) protein is Protein-L-isoaspartate O-methyltransferase 2.